The following is an 846-amino-acid chain: Aminopeptidase N (846 aa).

Substrate-binding positions include Glu-120 and 252 to 256; that span reads GAMEN. His-288 is a binding site for Zn(2+). The active-site Proton acceptor is Glu-289. Residues His-292 and Glu-311 each coordinate Zn(2+).

This sequence belongs to the peptidase M1 family. As to quaternary structure, monomer. It depends on Zn(2+) as a cofactor.

It localises to the cytoplasm. It catalyses the reaction Release of an N-terminal amino acid, Xaa-|-Yaa- from a peptide, amide or arylamide. Xaa is preferably Ala, but may be most amino acids including Pro (slow action). When a terminal hydrophobic residue is followed by a prolyl residue, the two may be released as an intact Xaa-Pro dipeptide.. Functionally, aminopeptidase with broad substrate specificity to several peptides. It has more affinity for oligopeptides than for dipeptides. It plays an essential role in the metabolism, it may be involved in nitrogen supply or protein turnover. This Lactococcus lactis subsp. cremoris (Streptococcus cremoris) protein is Aminopeptidase N (pepN).